The chain runs to 488 residues: 3-octaprenyl-4-hydroxybenzoate carboxy-lyase (488 aa).

Residue N172 participates in Mn(2+) binding. Prenylated FMN-binding positions include 175-177 (IYR), 189-191 (RWL), and 194-195 (RG). Position 238 (E238) interacts with Mn(2+). D287 acts as the Proton donor in catalysis.

It belongs to the UbiD family. As to quaternary structure, homohexamer. Prenylated FMN serves as cofactor. It depends on Mn(2+) as a cofactor.

The protein localises to the cell membrane. The catalysed reaction is a 4-hydroxy-3-(all-trans-polyprenyl)benzoate + H(+) = a 2-(all-trans-polyprenyl)phenol + CO2. It functions in the pathway cofactor biosynthesis; ubiquinone biosynthesis. In terms of biological role, catalyzes the decarboxylation of 3-octaprenyl-4-hydroxy benzoate to 2-octaprenylphenol, an intermediate step in ubiquinone biosynthesis. The polypeptide is 3-octaprenyl-4-hydroxybenzoate carboxy-lyase (Pseudomonas putida (strain ATCC 47054 / DSM 6125 / CFBP 8728 / NCIMB 11950 / KT2440)).